Reading from the N-terminus, the 117-residue chain is Small nuclear ribonucleoprotein Sm D1 (117 aa).

One can recognise a Sm domain in the interval 2–74; the sequence is KLVRFLMKLT…IRYYILPDSL (73 aa). A disordered region spans residues 81 to 117; the sequence is IDDSTKPKQKKKEVVRGRGRGRGRGTRGRGRGASRGF. The segment covering 87–117 has biased composition (basic residues); it reads PKQKKKEVVRGRGRGRGRGTRGRGRGASRGF.

It belongs to the snRNP core protein family. Belongs to the 40S cdc5-associated complex (or cwf complex), a spliceosome sub-complex reminiscent of a late-stage spliceosome composed of the U2, U5 and U6 snRNAs and at least brr2, cdc5, cwf2/prp3, cwf3/syf1, cwf4/syf3, cwf5/ecm2, spp42/cwf6, cwf7/spf27, cwf8, cwf9, cwf10, cwf11, cwf12, prp45/cwf13, cwf14, cwf15, cwf16, cwf17, cwf18, cwf19, cwf20, cwf21, cwf22, cwf23, cwf24, cwf25, cwf26, cyp7/cwf27, cwf28, cwf29/ist3, lea1, msl1, prp5/cwf1, prp10, prp12/sap130, prp17, prp22, sap61, sap62, sap114, sap145, slu7, smb1, smd1, smd3, smf1, smg1 and syf2. Interacts with saf5; the interaction is direct.

It localises to the nucleus. The protein resides in the cytoplasm. Functionally, plays a role in pre-mRNA splicing as a core component of the spliceosomal U1, U2, U4 and U5 small nuclear ribonucleoproteins (snRNPs), the building blocks of the spliceosome. In Schizosaccharomyces pombe (strain 972 / ATCC 24843) (Fission yeast), this protein is Small nuclear ribonucleoprotein Sm D1 (smd1).